Consider the following 400-residue polypeptide: Formate-dependent phosphoribosylglycinamide formyltransferase (400 aa).

N(1)-(5-phospho-beta-D-ribosyl)glycinamide-binding positions include glutamate 22 to leucine 23 and glutamate 82. Residues arginine 115, lysine 156, serine 161–glutamine 166, glutamate 196–isoleucine 199, and glutamate 204 each bind ATP. In terms of domain architecture, ATP-grasp spans arginine 120 to leucine 309. 2 residues coordinate Mg(2+): glutamate 268 and glutamate 280. N(1)-(5-phospho-beta-D-ribosyl)glycinamide-binding positions include aspartate 287, lysine 361, and arginine 368 to arginine 369.

This sequence belongs to the PurK/PurT family. As to quaternary structure, homodimer.

The enzyme catalyses N(1)-(5-phospho-beta-D-ribosyl)glycinamide + formate + ATP = N(2)-formyl-N(1)-(5-phospho-beta-D-ribosyl)glycinamide + ADP + phosphate + H(+). It participates in purine metabolism; IMP biosynthesis via de novo pathway; N(2)-formyl-N(1)-(5-phospho-D-ribosyl)glycinamide from N(1)-(5-phospho-D-ribosyl)glycinamide (formate route): step 1/1. Involved in the de novo purine biosynthesis. Catalyzes the transfer of formate to 5-phospho-ribosyl-glycinamide (GAR), producing 5-phospho-ribosyl-N-formylglycinamide (FGAR). Formate is provided by PurU via hydrolysis of 10-formyl-tetrahydrofolate. This is Formate-dependent phosphoribosylglycinamide formyltransferase from Xanthomonas axonopodis pv. citri (strain 306).